Here is a 436-residue protein sequence, read N- to C-terminus: UPF0597 protein YhaM (436 aa).

It belongs to the UPF0597 family.

The protein is UPF0597 protein YhaM of Salmonella paratyphi B (strain ATCC BAA-1250 / SPB7).